The sequence spans 241 residues: Gamma-interferon-inducible lysosomal thiol reductase-like protein (241 aa).

The first 18 residues, 1–18 (MLFKSLLLLSVYAVTCYG), serve as a signal peptide directing secretion. N-linked (GlcNAc...) asparagine glycosylation is found at asparagine 105 and asparagine 152. A helical transmembrane segment spans residues 218-235 (STGSAISSLGMIVTVVAV).

It belongs to the GILT family. In terms of tissue distribution, salivary gland (at protein level). Low-level expression in midgut (at protein level). Expressed in head and leg tissues. Ovary. Fat body. (Microbial infection) Detected with Plasmodium berghei sporozoites isolated from the saliva of infected Anopheles gambiae mosquitoes (at protein level).

The protein resides in the membrane. In terms of biological role, required for normal development of ovary and testis. (Microbial infection) Interacts with the surface of Plasmodium berghei sporozoites. Reduces P.berghei sporozoite cell traversal activity and transmission. Limits the motility of P.berghei sporozoites. Decreases the levels of host liver infection by P.berghei sporozoites. Does not affect P.berghei sporozoite viability. Indirectly promotes P.berghei survival in mosquitoes by influencing ovarian development and the subsequent production of 20-hydroxyecdysone and vitellogenin, which, in turn, modulates TEP1-dependent parasite killing. Promotes P.berghei infection in mosquitoes, most likely impacting the oocyst stage of parasite development. Its function is as follows. (Microbial infection) Promotes Plasmodium falciparum survival in mosquitoes. The sequence is that of Gamma-interferon-inducible lysosomal thiol reductase-like protein from Anopheles gambiae (African malaria mosquito).